A 420-amino-acid chain; its full sequence is Polymerase delta-interacting protein 3 (420 aa).

A2 carries the N-acetylalanine modification. At S5 the chain carries Phosphoserine. R33 is subject to Omega-N-methylarginine. At S127 the chain carries Phosphoserine. T140 carries the phosphothreonine modification. K200 participates in a covalent cross-link: Glycyl lysine isopeptide (Lys-Gly) (interchain with G-Cter in SUMO2). A phosphoserine mark is found at S215 and S217. K223 is covalently cross-linked (Glycyl lysine isopeptide (Lys-Gly) (interchain with G-Cter in SUMO2)). S244 is subject to Phosphoserine. A Glycyl lysine isopeptide (Lys-Gly) (interchain with G-Cter in SUMO2) cross-link involves residue K248. Residues 256–277 (TLVNKEEPPKELPPAEPVLSPL) form a disordered region. At S275 the chain carries Phosphoserine. An RRM domain is found at 280-351 (TKMTVNNLHP…QPMKCNLHMN (72 aa)). Residues 369-394 (PSVKKESELPRRGNPASSNPPAEVDP) are disordered. The span at 370 to 379 (SVKKESELPR) shows a compositional bias: basic and acidic residues. K372 participates in a covalent cross-link: Glycyl lysine isopeptide (Lys-Gly) (interchain with G-Cter in SUMO2). Residue S385 is modified to Phosphoserine. A Glycyl lysine isopeptide (Lys-Gly) (interchain with G-Cter in SUMO2) cross-link involves residue K417.

In terms of assembly, interacts with POLD2. Interacts with NCBP1 and EIF4A3. Associates with the multiprotein exon junction complex (EJC). Interacts with RPS6KB1 (activated). Interacts with ERH. Interacts with THOC2, DDX39B and ZC3H11A; the interactions are ATP-dependent and indicative for an association with the TREX complex.

It localises to the nucleus. The protein resides in the nucleus speckle. Its subcellular location is the cytoplasm. In terms of biological role, is involved in regulation of translation. Is preferentially associated with CBC-bound spliced mRNA-protein complexes during the pioneer round of mRNA translation. Contributes to enhanced translational efficiency of spliced over nonspliced mRNAs. Recruits activated ribosomal protein S6 kinase beta-1 I/RPS6KB1 to newly synthesized mRNA. Involved in nuclear mRNA export; probably mediated by association with the TREX complex. The sequence is that of Polymerase delta-interacting protein 3 (Poldip3) from Mus musculus (Mouse).